A 202-amino-acid chain; its full sequence is MDPQLPEPEPLVSLIEALRRLPGVGVRSARRMAYHLMQHDLQGADMLGRALAGAVQNLRHCARCNSFTEDDICATCANPKRDPSVLCVVETPADQNMIEASHGYRGLYYVLMGRVAPLEGIGPRELDFQRLLERASDGVVREVILATNFTAEGETTAHFLGEVLAGKGLKVTRLARGVPAGSELEYVDAGTIAWALMERKSA.

The C4-type zinc finger occupies 61–76; sequence CARCNSFTEDDICATC. Positions 84 to 179 constitute a Toprim domain; it reads SVLCVVETPA…KVTRLARGVP (96 aa).

It belongs to the RecR family.

May play a role in DNA repair. It seems to be involved in an RecBC-independent recombinational process of DNA repair. It may act with RecF and RecO. The chain is Recombination protein RecR from Bordetella petrii (strain ATCC BAA-461 / DSM 12804 / CCUG 43448).